The primary structure comprises 486 residues: UDP-N-acetylmuramate--L-alanine ligase (486 aa).

Residue 129-135 (GTHGKTT) participates in ATP binding.

Belongs to the MurCDEF family.

The protein resides in the cytoplasm. It carries out the reaction UDP-N-acetyl-alpha-D-muramate + L-alanine + ATP = UDP-N-acetyl-alpha-D-muramoyl-L-alanine + ADP + phosphate + H(+). It participates in cell wall biogenesis; peptidoglycan biosynthesis. In terms of biological role, cell wall formation. The sequence is that of UDP-N-acetylmuramate--L-alanine ligase from Vibrio cholerae serotype O1 (strain ATCC 39541 / Classical Ogawa 395 / O395).